The following is a 251-amino-acid chain: Imidazole glycerol phosphate synthase subunit HisF (251 aa).

Residues aspartate 11 and aspartate 130 contribute to the active site.

It belongs to the HisA/HisF family. As to quaternary structure, heterodimer of HisH and HisF.

The protein resides in the cytoplasm. It catalyses the reaction 5-[(5-phospho-1-deoxy-D-ribulos-1-ylimino)methylamino]-1-(5-phospho-beta-D-ribosyl)imidazole-4-carboxamide + L-glutamine = D-erythro-1-(imidazol-4-yl)glycerol 3-phosphate + 5-amino-1-(5-phospho-beta-D-ribosyl)imidazole-4-carboxamide + L-glutamate + H(+). It functions in the pathway amino-acid biosynthesis; L-histidine biosynthesis; L-histidine from 5-phospho-alpha-D-ribose 1-diphosphate: step 5/9. Its function is as follows. IGPS catalyzes the conversion of PRFAR and glutamine to IGP, AICAR and glutamate. The HisF subunit catalyzes the cyclization activity that produces IGP and AICAR from PRFAR using the ammonia provided by the HisH subunit. This Pelodictyon phaeoclathratiforme (strain DSM 5477 / BU-1) protein is Imidazole glycerol phosphate synthase subunit HisF.